The sequence spans 248 residues: 2,3-bisphosphoglycerate-dependent phosphoglycerate mutase (248 aa).

Residues 10–17 (RHGQSEWN), 23–24 (TG), R62, 89–92 (ERHY), K100, 116–117 (RR), and 183–184 (GN) contribute to the substrate site. The active-site Tele-phosphohistidine intermediate is the H11. E89 serves as the catalytic Proton donor/acceptor.

Belongs to the phosphoglycerate mutase family. BPG-dependent PGAM subfamily.

It catalyses the reaction (2R)-2-phosphoglycerate = (2R)-3-phosphoglycerate. It functions in the pathway carbohydrate degradation; glycolysis; pyruvate from D-glyceraldehyde 3-phosphate: step 3/5. Its function is as follows. Catalyzes the interconversion of 2-phosphoglycerate and 3-phosphoglycerate. The protein is 2,3-bisphosphoglycerate-dependent phosphoglycerate mutase of Corynebacterium diphtheriae (strain ATCC 700971 / NCTC 13129 / Biotype gravis).